Here is a 96-residue protein sequence, read N- to C-terminus: Probable quinol oxidase subunit 4 (96 aa).

The next 3 helical transmembrane spans lie at 8–28, 37–57, and 68–88; these read TVGFIASIVLTLLAVFVTLYT, TIIFGFAFIQAAVQLLMFMHL, and FKVIFAIIITLVTVIGTYWVM.

It belongs to the cytochrome c oxidase bacterial subunit 4 family.

Its subcellular location is the cell membrane. The catalysed reaction is 2 a quinol + O2 = 2 a quinone + 2 H2O. Functionally, catalyzes quinol oxidation with the concomitant reduction of oxygen to water. The protein is Probable quinol oxidase subunit 4 (qoxD) of Staphylococcus haemolyticus (strain JCSC1435).